A 156-amino-acid polypeptide reads, in one-letter code: Lipoprotein signal peptidase (156 aa).

3 helical membrane-spanning segments follow: residues 5–25 (FKFI…DQWV), 64–84 (YLHL…RTLL), and 89–109 (IAFG…FIHG). Residues Asp113 and Asp130 contribute to the active site. The chain crosses the membrane as a helical span at residues 122 to 142 (NFAIFNVADVMINISVALILI).

Belongs to the peptidase A8 family.

It is found in the cell inner membrane. The enzyme catalyses Release of signal peptides from bacterial membrane prolipoproteins. Hydrolyzes -Xaa-Yaa-Zaa-|-(S,diacylglyceryl)Cys-, in which Xaa is hydrophobic (preferably Leu), and Yaa (Ala or Ser) and Zaa (Gly or Ala) have small, neutral side chains.. The protein operates within protein modification; lipoprotein biosynthesis (signal peptide cleavage). In terms of biological role, this protein specifically catalyzes the removal of signal peptides from prolipoproteins. This is Lipoprotein signal peptidase from Campylobacter jejuni subsp. jejuni serotype O:2 (strain ATCC 700819 / NCTC 11168).